The sequence spans 369 residues: Deoxyhypusine synthase (369 aa).

NAD(+) contacts are provided by residues 105 to 109, 131 to 133, Glu137, and Asp238; these read SNLIS and TAG. Spermidine is bound at residue 136–137; sequence EE. Asp243 lines the spermidine pocket. Gly283 is an NAD(+) binding site. Spermidine is bound at residue His288. 308-309 provides a ligand contact to NAD(+); sequence TA. Spermidine-binding positions include 314–316 and 323–329; these read GSD and EAVSWGK. Lys329 (nucleophile) is an active-site residue. 342–343 contributes to the NAD(+) binding site; that stretch reads DA.

Belongs to the deoxyhypusine synthase family. The cofactor is NAD(+).

It catalyses the reaction [eIF5A protein]-L-lysine + spermidine = [eIF5A protein]-deoxyhypusine + propane-1,3-diamine. It functions in the pathway protein modification; eIF5A hypusination. Catalyzes the NAD-dependent oxidative cleavage of spermidine and the subsequent transfer of the butylamine moiety of spermidine to the epsilon-amino group of a critical lysine residue of the eIF-5A precursor protein to form the intermediate deoxyhypusine residue. This is the first step of the post-translational modification of that lysine into an unusual amino acid residue named hypusine. Hypusination is unique to mature eIF-5A factor and is essential for its function. In Rattus norvegicus (Rat), this protein is Deoxyhypusine synthase (Dhps).